Reading from the N-terminus, the 533-residue chain is tRNA(Ile)-lysidine synthase (533 aa).

21 to 26 (SGGADS) is an ATP binding site. In terms of domain architecture, CMP/dCMP-type deaminase spans 377–500 (DLLDTAMGEA…DLLSSHWGHV (124 aa)).

Belongs to the tRNA(Ile)-lysidine synthase family.

It localises to the cytoplasm. The enzyme catalyses cytidine(34) in tRNA(Ile2) + L-lysine + ATP = lysidine(34) in tRNA(Ile2) + AMP + diphosphate + H(+). Functionally, ligates lysine onto the cytidine present at position 34 of the AUA codon-specific tRNA(Ile) that contains the anticodon CAU, in an ATP-dependent manner. Cytidine is converted to lysidine, thus changing the amino acid specificity of the tRNA from methionine to isoleucine. The sequence is that of tRNA(Ile)-lysidine synthase from Deinococcus deserti (strain DSM 17065 / CIP 109153 / LMG 22923 / VCD115).